The following is a 254-amino-acid chain: Probable phosphatase Sbal223_2880 (254 aa).

Zn(2+) is bound by residues His-8, His-10, His-16, His-41, Glu-74, His-102, His-132, Asp-193, and His-195.

Belongs to the PHP family. The cofactor is Zn(2+).

This is Probable phosphatase Sbal223_2880 from Shewanella baltica (strain OS223).